The chain runs to 109 residues: Cyclic di-AMP receptor A (109 aa).

10 residues coordinate 3',3'-c-di-AMP: Thr21, Phe25, Thr28, Gly35, Phe36, Leu37, Asn41, Gly47, Glu92, and Gly94.

As to quaternary structure, homotrimer.

It localises to the cytoplasm. In terms of biological role, binds cyclic di-AMP (c-di-AMP) and is probably involved in c-di-AMP-mediated signaling pathways. In vitro, can also bind cyclic GMP-AMP (3'3'-cGAMP), with lower affinity, but not c-di-GMP or 2'3'-cGAMP. The polypeptide is Cyclic di-AMP receptor A (Bacillus subtilis (strain 168)).